A 91-amino-acid chain; its full sequence is Early E3B 10.4 kDa protein (91 aa).

The first 22 residues, 1-22 (MIPRVLILLTLVALFCACSTLA), serve as a signal peptide directing secretion. At 23-34 (AVAHIEVDCIPP) the chain is on the lumenal side. The helical transmembrane segment at 35 to 60 (FTVYLLYGFVTLILICSLVTVVIAFI) threads the bilayer. The Cytoplasmic portion of the chain corresponds to 61–91 (QFIDWICVRIAYLRHHPQYRDRTIADLLRIL).

The protein belongs to the adenoviridae E3B family.

Its subcellular location is the host endoplasmic reticulum membrane. Functionally, down-regulates the EGF receptor. This chain is Early E3B 10.4 kDa protein, found in Homo sapiens (Human).